The chain runs to 84 residues: Acyl carrier protein (84 aa).

A Carrier domain is found at 4–80 (SETFEKVKKI…EAVDYINNQV (77 aa)). Ser40 is subject to O-(pantetheine 4'-phosphoryl)serine.

Belongs to the acyl carrier protein (ACP) family. In terms of processing, 4'-phosphopantetheine is transferred from CoA to a specific serine of apo-ACP by AcpS. This modification is essential for activity because fatty acids are bound in thioester linkage to the sulfhydryl of the prosthetic group.

The protein localises to the cytoplasm. Its pathway is lipid metabolism; fatty acid biosynthesis. Carrier of the growing fatty acid chain in fatty acid biosynthesis. This is Acyl carrier protein from Nostoc sp. (strain PCC 7120 / SAG 25.82 / UTEX 2576).